Here is a 225-residue protein sequence, read N- to C-terminus: MNSIQFPLLDRTAPNSVISTTLNDLSNWSRLSSLWPLLYGTSCCFIEFASLIGSRFDFDRYGLVPRSSPRQSDLILTAGTVTMKMAPSLVRLYEQMPEPKYVIAMGACTITGGMFSTDSYSTVRGVDKLIPVDVYLPGCPPKPEAVIDAITKLRKKISRELYEDRIRSQRANRCFTTNHKFHVRRSIHTGNYDQRVLYQPPSTSEIPTEIFFKYKNSVSSAELVN.

[4Fe-4S] cluster is bound by residues C43, C44, C108, and C139.

This sequence belongs to the complex I 20 kDa subunit family. In terms of assembly, NDH is composed of at least 16 different subunits, 5 of which are encoded in the nucleus. [4Fe-4S] cluster serves as cofactor.

The protein resides in the plastid. It localises to the chloroplast thylakoid membrane. It carries out the reaction a plastoquinone + NADH + (n+1) H(+)(in) = a plastoquinol + NAD(+) + n H(+)(out). The catalysed reaction is a plastoquinone + NADPH + (n+1) H(+)(in) = a plastoquinol + NADP(+) + n H(+)(out). NDH shuttles electrons from NAD(P)H:plastoquinone, via FMN and iron-sulfur (Fe-S) centers, to quinones in the photosynthetic chain and possibly in a chloroplast respiratory chain. The immediate electron acceptor for the enzyme in this species is believed to be plastoquinone. Couples the redox reaction to proton translocation, and thus conserves the redox energy in a proton gradient. In Solanum bulbocastanum (Wild potato), this protein is NAD(P)H-quinone oxidoreductase subunit K, chloroplastic.